Here is a 420-residue protein sequence, read N- to C-terminus: Septin-8-A (420 aa).

Positions 39-305 constitute a Septin-type G domain; the sequence is QGFCFNILCV…ELYRRCKLEE (267 aa). The G1 motif stretch occupies residues 49–56; that stretch reads GETGIGKS. GTP contacts are provided by residues 49 to 56, Gly-104, 185 to 193, Gly-239, and Arg-254; these read GETGIGKS and KADTISKSE. The interval 101 to 104 is G3 motif; sequence DTVG. The tract at residues 184–187 is G4 motif; that stretch reads AKAD. Residues 321 to 407 are a coiled coil; that stretch reads QETYEAKRKE…RRKVAAETLS (87 aa). Positions 393–420 are disordered; the sequence is MNAFNRRKVAAETLSLSQPLKKDKDKKN.

The protein belongs to the TRAFAC class TrmE-Era-EngA-EngB-Septin-like GTPase superfamily. Septin GTPase family.

In Danio rerio (Zebrafish), this protein is Septin-8-A (sept8a).